Here is a 719-residue protein sequence, read N- to C-terminus: Protein Hook homolog 2 (719 aa).

The tract at residues 1 to 161 (MSVDKAELCG…ELMTKDTPDS (161 aa)) is required for localization to the centrosome and induction of aggresome formation. Residues 1-548 (MSVDKAELCG…LKRKLEEHLQ (548 aa)) are sufficient for interaction with microtubules. The 117-residue stretch at 6-122 (AELCGSLLTW…KLLQLVLGCA (117 aa)) folds into the Calponin-homology (CH) domain. The residue at position 163 (Ser-163) is a Phosphoserine. 2 coiled-coil regions span residues 180 to 427 (LSEE…AQLQ) and 455 to 607 (AELR…VDKA). Thr-230 carries the phosphothreonine modification. A required for localization to the centrosome and induction of aggresome formation region spans residues 533–719 (DAISILLKRK…SLNLRPTDKH (187 aa)). Residues 584 to 719 (HNLQKKDADL…SLNLRPTDKH (136 aa)) are sufficient for interaction with CNTRL. Residues 696–719 (LATNSRRGPLGRLASLNLRPTDKH) form a disordered region. The residue at position 710 (Ser-710) is a Phosphoserine.

It belongs to the hook family. In terms of assembly, self-associates. Component of the FTS/Hook/FHIP complex (FHF complex), composed of AKTIP/FTS, FHIP1B, and one or more members of the Hook family of proteins HOOK1, HOOK2, and HOOK3. May interact directly with AKTIP/FTS, HOOK1 and HOOK3. Associates with several subunits of the homotypic vesicular sorting complex (the HOPS complex) including VPS16 and VPS41; these interactions may be indirect. Interacts with CNTRL. Interacts with microtubules. Interacts with ZC3H14. Interacts with LRGUK (via guanylate kinase-like domain). Interacts with CCDC181. Interacts with AP4M1; the interaction is direct, mediates the interaction between FTS-Hook-FHIP (FHF) complex and AP-4 and the perinuclear distribution of AP-4.

The protein localises to the cytoplasm. Its subcellular location is the cytoskeleton. It is found in the microtubule organizing center. The protein resides in the centrosome. It localises to the golgi apparatus. The protein localises to the trans-Golgi network. In terms of biological role, component of the FTS/Hook/FHIP complex (FHF complex). The FHF complex may function to promote vesicle trafficking and/or fusion via the homotypic vesicular protein sorting complex (the HOPS complex). Contributes to the establishment and maintenance of centrosome function. May function in the positioning or formation of aggresomes, which are pericentriolar accumulations of misfolded proteins, proteasomes and chaperones. FHF complex promotes the distribution of AP-4 complex to the perinuclear area of the cell. In Homo sapiens (Human), this protein is Protein Hook homolog 2 (HOOK2).